The following is a 154-amino-acid chain: Crossover junction endodeoxyribonuclease RuvC (154 aa).

Residues Asp-7, Glu-67, and Asp-139 contribute to the active site. Mg(2+) contacts are provided by Asp-7, Glu-67, and Asp-139.

The protein belongs to the RuvC family. As to quaternary structure, homodimer which binds Holliday junction (HJ) DNA. The HJ becomes 2-fold symmetrical on binding to RuvC with unstacked arms; it has a different conformation from HJ DNA in complex with RuvA. In the full resolvosome a probable DNA-RuvA(4)-RuvB(12)-RuvC(2) complex forms which resolves the HJ. Requires Mg(2+) as cofactor.

Its subcellular location is the cytoplasm. The enzyme catalyses Endonucleolytic cleavage at a junction such as a reciprocal single-stranded crossover between two homologous DNA duplexes (Holliday junction).. The RuvA-RuvB-RuvC complex processes Holliday junction (HJ) DNA during genetic recombination and DNA repair. Endonuclease that resolves HJ intermediates. Cleaves cruciform DNA by making single-stranded nicks across the HJ at symmetrical positions within the homologous arms, yielding a 5'-phosphate and a 3'-hydroxyl group; requires a central core of homology in the junction. The consensus cleavage sequence is 5'-(A/T)TT(C/G)-3'. Cleavage occurs on the 3'-side of the TT dinucleotide at the point of strand exchange. HJ branch migration catalyzed by RuvA-RuvB allows RuvC to scan DNA until it finds its consensus sequence, where it cleaves and resolves the cruciform DNA. The sequence is that of Crossover junction endodeoxyribonuclease RuvC from Synechococcus sp. (strain WH7803).